The following is a 392-amino-acid chain: MSSSRIPQCENSSRLSLSSIFRYFGTTSTIATMSPKKVTIIGSGNWGSAIARIVGSTTKSFPDEFDPTVRMWVFEEIVNGEKLSEVINNRHENIKYLPGKVLPNNVVAVTDLVESCEGSNVLVFVVPHQFVKGICEKLVGKIPADTQAISLIKGISFDKTNQGVSTEKRGGLKLISEEIKEILKIEVSVLMGANLAPEVANDNFCEATIGCKRKAEDGPLLKKLFHTDNFRINVVEDAHTVELCGALKNVVACAAGFTDGLGYGDNTKAAVIRLGLMETTKFVEHYYPGSNLQTFFESCGIADLITTCYGGRNRKVCEAFVKTGKSMAEVEKELLNGQSAQGPLTAEEVYLMMHKTGLDAKFPLFTAVHKICAGEMKPAELVDCLRNHPEHM.

NAD(+) contacts are provided by residues 42 to 47 (GSGNWG), Phe-130, Lys-153, and Ala-196. Lys-153 serves as a coordination point for substrate. Lys-248 (proton acceptor) is an active-site residue. Positions 312 and 341 each coordinate NAD(+). Residue 312 to 313 (RN) participates in substrate binding.

It belongs to the NAD-dependent glycerol-3-phosphate dehydrogenase family. Homodimer.

The protein resides in the cytoplasm. The catalysed reaction is sn-glycerol 3-phosphate + NAD(+) = dihydroxyacetone phosphate + NADH + H(+). In Caenorhabditis elegans, this protein is Probable glycerol-3-phosphate dehydrogenase 2 (gpdh-2).